We begin with the raw amino-acid sequence, 425 residues long: Proline--tRNA ligase (425 aa).

Belongs to the class-II aminoacyl-tRNA synthetase family. ProS type 2 subfamily. Homodimer.

Its subcellular location is the cytoplasm. The catalysed reaction is tRNA(Pro) + L-proline + ATP = L-prolyl-tRNA(Pro) + AMP + diphosphate. In terms of biological role, catalyzes the attachment of proline to tRNA(Pro) in a two-step reaction: proline is first activated by ATP to form Pro-AMP and then transferred to the acceptor end of tRNA(Pro). The polypeptide is Proline--tRNA ligase (Wolbachia sp. subsp. Brugia malayi (strain TRS)).